The primary structure comprises 525 residues: Cytochrome P450 4V2 (525 aa).

The helical transmembrane segment at L14–F34 threads the bilayer. Heme contacts are provided by E329 and C467.

Belongs to the cytochrome P450 family. Heme serves as cofactor.

It localises to the endoplasmic reticulum membrane. The catalysed reaction is dodecanoate + reduced [NADPH--hemoprotein reductase] + O2 = 12-hydroxydodecanoate + oxidized [NADPH--hemoprotein reductase] + H2O + H(+). The enzyme catalyses tetradecanoate + reduced [NADPH--hemoprotein reductase] + O2 = 14-hydroxytetradecanoate + oxidized [NADPH--hemoprotein reductase] + H2O + H(+). It catalyses the reaction hexadecanoate + reduced [NADPH--hemoprotein reductase] + O2 = 16-hydroxyhexadecanoate + oxidized [NADPH--hemoprotein reductase] + H2O + H(+). It carries out the reaction (5Z,8Z,11Z,14Z,17Z)-eicosapentaenoate + reduced [NADPH--hemoprotein reductase] + O2 = 20-hydroxy-(5Z,8Z,11Z,14Z,17Z)-eicosapentaenoate + oxidized [NADPH--hemoprotein reductase] + H2O + H(+). The catalysed reaction is (4Z,7Z,10Z,13Z,16Z,19Z)-docosahexaenoate + reduced [NADPH--hemoprotein reductase] + O2 = 22-hydroxy-(4Z,7Z,10Z,13Z,16Z,19Z)-docosahexaenoate + oxidized [NADPH--hemoprotein reductase] + H2O + H(+). Its pathway is lipid metabolism; fatty acid metabolism. Its activity is regulated as follows. Inhibited by N-hydroxy-N'-(4-n-butyl-2-methylphenyl formamidine)(HET0016) with an IC(50) of 38 nM. In terms of biological role, a cytochrome P450 monooxygenase involved in fatty acid metabolism in the eye. Catalyzes the omega-hydroxylation of polyunsaturated fatty acids (PUFAs) docosahexaenoate (DHA) and its precursor eicosapentaenoate (EPA), and may contribute to the homeostasis of these retinal PUFAs. Omega hydroxylates saturated fatty acids such as laurate, myristate and palmitate, the catalytic efficiency decreasing in the following order: myristate &gt; laurate &gt; palmitate (C14&gt;C12&gt;C16). Mechanistically, uses molecular oxygen inserting one oxygen atom into a substrate, and reducing the second into a water molecule, with two electrons provided by NADPH via cytochrome P450 reductase (CPR; NADPH-ferrihemoprotein reductase). The polypeptide is Cytochrome P450 4V2 (Cyp4v2) (Mus musculus (Mouse)).